Consider the following 30-residue polypeptide: Gamma-II crystallin (30 aa).

The Beta/gamma crystallin 'Greek key' domain maps to 1 to 30 (GKITFYEDRNFQGRCYECSTDCPDLSPYFS).

Belongs to the beta/gamma-crystallin family. Monomer.

In terms of biological role, crystallins are the dominant structural components of the vertebrate eye lens. In Rhizoprionodon acutus (Milk shark), this protein is Gamma-II crystallin.